Here is a 332-residue protein sequence, read N- to C-terminus: Holliday junction branch migration complex subunit RuvB (332 aa).

The segment at 1 to 181 (MERIISELEM…FGVSHKMEYY (181 aa)) is large ATPase domain (RuvB-L). Positions 20, 21, 62, 65, 66, 67, 171, 181, and 218 each coordinate ATP. Position 66 (T66) interacts with Mg(2+). The interval 182-252 (NENEIKSIII…SAKNALDMLG (71 aa)) is small ATPAse domain (RuvB-S). Positions 255–332 (SNGLDDLDRN…QHFKKVEVKI (78 aa)) are head domain (RuvB-H). Positions 291, 310, and 315 each coordinate DNA.

The protein belongs to the RuvB family. In terms of assembly, homohexamer. Forms an RuvA(8)-RuvB(12)-Holliday junction (HJ) complex. HJ DNA is sandwiched between 2 RuvA tetramers; dsDNA enters through RuvA and exits via RuvB. An RuvB hexamer assembles on each DNA strand where it exits the tetramer. Each RuvB hexamer is contacted by two RuvA subunits (via domain III) on 2 adjacent RuvB subunits; this complex drives branch migration. In the full resolvosome a probable DNA-RuvA(4)-RuvB(12)-RuvC(2) complex forms which resolves the HJ.

The protein localises to the cytoplasm. It catalyses the reaction ATP + H2O = ADP + phosphate + H(+). In terms of biological role, the RuvA-RuvB-RuvC complex processes Holliday junction (HJ) DNA during genetic recombination and DNA repair, while the RuvA-RuvB complex plays an important role in the rescue of blocked DNA replication forks via replication fork reversal (RFR). RuvA specifically binds to HJ cruciform DNA, conferring on it an open structure. The RuvB hexamer acts as an ATP-dependent pump, pulling dsDNA into and through the RuvAB complex. RuvB forms 2 homohexamers on either side of HJ DNA bound by 1 or 2 RuvA tetramers; 4 subunits per hexamer contact DNA at a time. Coordinated motions by a converter formed by DNA-disengaged RuvB subunits stimulates ATP hydrolysis and nucleotide exchange. Immobilization of the converter enables RuvB to convert the ATP-contained energy into a lever motion, pulling 2 nucleotides of DNA out of the RuvA tetramer per ATP hydrolyzed, thus driving DNA branch migration. The RuvB motors rotate together with the DNA substrate, which together with the progressing nucleotide cycle form the mechanistic basis for DNA recombination by continuous HJ branch migration. Branch migration allows RuvC to scan DNA until it finds its consensus sequence, where it cleaves and resolves cruciform DNA. This is Holliday junction branch migration complex subunit RuvB from Fusobacterium nucleatum subsp. nucleatum (strain ATCC 25586 / DSM 15643 / BCRC 10681 / CIP 101130 / JCM 8532 / KCTC 2640 / LMG 13131 / VPI 4355).